Consider the following 210-residue polypeptide: Superoxide dismutase [Mn], mitochondrial (210 aa).

4 residues coordinate Mn(2+): H30, H78, D166, and H170.

This sequence belongs to the iron/manganese superoxide dismutase family. In terms of assembly, homotetramer. It depends on Mn(2+) as a cofactor. Post-translationally, the N-terminus is blocked.

It localises to the mitochondrion matrix. The enzyme catalyses 2 superoxide + 2 H(+) = H2O2 + O2. Its function is as follows. Destroys superoxide anion radicals which are normally produced within the cells and which are toxic to biological systems. This chain is Superoxide dismutase [Mn], mitochondrial (SOD), found in Penicillium chrysogenum (Penicillium notatum).